The following is a 434-amino-acid chain: Alpha-enolase (434 aa).

Residue serine 2 is modified to N-acetylserine. An N6-acetyllysine modification is found at lysine 5. Serine 27 is subject to Phosphoserine. Residues 31-38 (FRAAVPSG) are epitope recognized by CAR and healthy patient antibodies. Position 40 (serine 40) interacts with Mg(2+). Position 44 is a phosphotyrosine (tyrosine 44). Residues 56–63 (RYMGKGVS) are epitope recognized by CAR antibodies. N6-acetyllysine; alternate is present on lysine 60. Lysine 60 is modified (N6-succinyllysine; alternate). An N6-acetyllysine mark is found at lysine 64 and lysine 71. At lysine 89 the chain carries N6-acetyllysine; alternate. Lysine 89 bears the N6-succinyllysine; alternate mark. N6-acetyllysine occurs at positions 92 and 126. The interval 97-237 (MDGTENKSKF…KTAIGKAGYT (141 aa)) is required for repression of c-myc promoter activity. The substrate site is built by histidine 158 and glutamate 167. Lysine 193 and lysine 199 each carry N6-acetyllysine. N6-acetyllysine; alternate is present on lysine 202. A Glycyl lysine isopeptide (Lys-Gly) (interchain with G-Cter in SUMO2); alternate cross-link involves residue lysine 202. Glutamate 210 serves as the catalytic Proton donor. Residues lysine 228 and lysine 233 each carry the N6-acetyllysine; alternate modification. Position 228 is an N6-succinyllysine; alternate (lysine 228). Lysine 228 is subject to N6-(2-hydroxyisobutyryl)lysine; alternate. An N6-malonyllysine; alternate modification is found at lysine 233. Aspartate 245 contributes to the Mg(2+) binding site. At serine 254 the chain carries Phosphoserine. Lysine 256 is subject to N6-acetyllysine. 2 positions are modified to phosphoserine: serine 263 and serine 272. The residue at position 281 (lysine 281) is an N6-acetyllysine; alternate. Residue lysine 281 is modified to N6-(2-hydroxyisobutyryl)lysine; alternate. The residue at position 285 (lysine 285) is an N6-acetyllysine. The residue at position 287 (tyrosine 287) is a Phosphotyrosine. The residue at position 291 (serine 291) is a Phosphoserine. The Mg(2+) site is built by glutamate 293 and aspartate 318. Substrate contacts are provided by glutamate 293 and aspartate 318. N6-acetyllysine occurs at positions 335 and 343. The active-site Proton acceptor is the lysine 343. Substrate is bound by residues 370 to 373 (SHRS) and lysine 394. Residues 405–434 (AKYNQLLRIEEELGSKAKFAGRNFRNPLAK) are required for interaction with PLG. Lysine 406 is modified (N6-acetyllysine). Lysine 420 carries the N6-acetyllysine; alternate modification. Lysine 420 is subject to N6-succinyllysine; alternate. Lysine 420 carries the N6-malonyllysine; alternate modification.

Belongs to the enolase family. Mammalian enolase is composed of 3 isozyme subunits, alpha, beta and gamma, which can form homodimers or heterodimers which are cell-type and development-specific. ENO1 interacts with PLG in the neuronal plasma membrane and promotes its activation. The C-terminal lysine is required for this binding. Isoform MBP-1 interacts with TRAPPC2B. Interacts with ENO4 and PGAM2. Interacts with CMTM6. The cofactor is Mg(2+). Post-translationally, ISGylated. In terms of processing, lysine 2-hydroxyisobutyrylation (Khib) by p300/EP300 activates the phosphopyruvate hydratase activity. As to expression, the alpha/alpha homodimer is expressed in embryo and in most adult tissues. The alpha/beta heterodimer and the beta/beta homodimer are found in striated muscle, and the alpha/gamma heterodimer and the gamma/gamma homodimer in neurons.

The protein resides in the cytoplasm. The protein localises to the cell membrane. It is found in the myofibril. Its subcellular location is the sarcomere. It localises to the m line. The protein resides in the nucleus. The catalysed reaction is (2R)-2-phosphoglycerate = phosphoenolpyruvate + H2O. The protein operates within carbohydrate degradation; glycolysis; pyruvate from D-glyceraldehyde 3-phosphate: step 4/5. Its function is as follows. Glycolytic enzyme the catalyzes the conversion of 2-phosphoglycerate to phosphoenolpyruvate. In addition to glycolysis, involved in various processes such as growth control, hypoxia tolerance and allergic responses. May also function in the intravascular and pericellular fibrinolytic system due to its ability to serve as a receptor and activator of plasminogen on the cell surface of several cell-types such as leukocytes and neurons. Stimulates immunoglobulin production. Binds to the myc promoter and acts as a transcriptional repressor. May be a tumor suppressor. This Homo sapiens (Human) protein is Alpha-enolase (ENO1).